The sequence spans 161 residues: Ribonuclease P protein component (161 aa).

The protein belongs to the RnpA family. Consists of a catalytic RNA component (M1 or rnpB) and a protein subunit.

The catalysed reaction is Endonucleolytic cleavage of RNA, removing 5'-extranucleotides from tRNA precursor.. RNaseP catalyzes the removal of the 5'-leader sequence from pre-tRNA to produce the mature 5'-terminus. It can also cleave other RNA substrates such as 4.5S RNA. The protein component plays an auxiliary but essential role in vivo by binding to the 5'-leader sequence and broadening the substrate specificity of the ribozyme. The sequence is that of Ribonuclease P protein component from Helicobacter pylori (strain J99 / ATCC 700824) (Campylobacter pylori J99).